The chain runs to 437 residues: Enolase 2 (437 aa).

Gln-162 serves as a coordination point for (2R)-2-phosphoglycerate. Catalysis depends on Glu-204, which acts as the Proton donor. Residues Asp-251, Glu-297, and Asp-324 each coordinate Mg(2+). (2R)-2-phosphoglycerate-binding residues include Lys-349, Arg-378, Ser-379, and Lys-400. Lys-349 functions as the Proton acceptor in the catalytic mechanism.

The protein belongs to the enolase family. The cofactor is Mg(2+).

It localises to the cytoplasm. Its subcellular location is the secreted. It is found in the cell surface. It carries out the reaction (2R)-2-phosphoglycerate = phosphoenolpyruvate + H2O. The protein operates within carbohydrate degradation; glycolysis; pyruvate from D-glyceraldehyde 3-phosphate: step 4/5. In terms of biological role, catalyzes the reversible conversion of 2-phosphoglycerate (2-PG) into phosphoenolpyruvate (PEP). It is essential for the degradation of carbohydrates via glycolysis. The sequence is that of Enolase 2 from Chlorobaculum tepidum (strain ATCC 49652 / DSM 12025 / NBRC 103806 / TLS) (Chlorobium tepidum).